The chain runs to 29 residues: Sarcolamban B (29 aa).

Residues Leu7–Ala27 traverse the membrane as a helical segment.

Interacts with SERCA. As to expression, strongly expressed in embryonic and larval somatic muscles and postembryonic heart.

It localises to the sarcoplasmic reticulum membrane. Plays an essential role in the regulation of calcium transport at the sarcoplasmic reticulum (SR), which is secondarily required for regular muscle contraction. This is Sarcolamban B from Drosophila melanogaster (Fruit fly).